A 966-amino-acid chain; its full sequence is DNA mismatch repair protein MutS (966 aa).

709-716 (GPNMAGKS) is a binding site for ATP. The interval 894–914 (EGQRPPSSPAQPPAPPAPVVV) is disordered. The span at 899-912 (PSSPAQPPAPPAPV) shows a compositional bias: pro residues.

It belongs to the DNA mismatch repair MutS family.

Functionally, this protein is involved in the repair of mismatches in DNA. It is possible that it carries out the mismatch recognition step. This protein has a weak ATPase activity. This is DNA mismatch repair protein MutS from Chloroflexus aurantiacus (strain ATCC 29366 / DSM 635 / J-10-fl).